Consider the following 85-residue polypeptide: uncharacterized protein (85 aa).

Helical transmembrane passes span 13–35 (KWLA…FQPL) and 59–81 (EGIV…HLLL).

It is found in the cell membrane. This is an uncharacterized protein from Archaeoglobus fulgidus (strain ATCC 49558 / DSM 4304 / JCM 9628 / NBRC 100126 / VC-16).